Reading from the N-terminus, the 136-residue chain is Small ribosomal subunit protein uS9 (136 aa).

The protein belongs to the universal ribosomal protein uS9 family.

The chain is Small ribosomal subunit protein uS9 from Borreliella burgdorferi (strain ZS7) (Borrelia burgdorferi).